The following is a 189-amino-acid chain: MTTSTTINKGDRLLHQNVLGSRRFSNYWWATIVTLGASGFLLAGISSYLKVNLLIVSDPTQLVFVPQGLVMGLYGAAGLLLATYLWLVILLDVGGGYNEFNQETGTIKIFRWGFPGKNRRIEIDSRIEDVQSVRIAVKEGLNPIRALYLRIKGRRDIPLTRVGQPLSLTELETEGAKLARFLGVSLEGL.

Helical transmembrane passes span 29–49 (WATI…SSYL) and 69–89 (LVMG…WLVI).

It belongs to the Ycf4 family.

The protein resides in the cellular thylakoid membrane. In terms of biological role, seems to be required for the assembly of the photosystem I complex. This is Photosystem I assembly protein Ycf4 from Nostoc punctiforme (strain ATCC 29133 / PCC 73102).